A 266-amino-acid chain; its full sequence is 3-methyl-2-oxobutanoate hydroxymethyltransferase (266 aa).

2 residues coordinate Mg(2+): D43 and D82. 3-methyl-2-oxobutanoate-binding positions include 43–44, D82, and K110; that span reads DS. Mg(2+) is bound at residue E112. The Proton acceptor role is filled by E179.

It belongs to the PanB family. In terms of assembly, homodecamer; pentamer of dimers. Requires Mg(2+) as cofactor.

The protein localises to the cytoplasm. The catalysed reaction is 3-methyl-2-oxobutanoate + (6R)-5,10-methylene-5,6,7,8-tetrahydrofolate + H2O = 2-dehydropantoate + (6S)-5,6,7,8-tetrahydrofolate. It functions in the pathway cofactor biosynthesis; (R)-pantothenate biosynthesis; (R)-pantoate from 3-methyl-2-oxobutanoate: step 1/2. Functionally, catalyzes the reversible reaction in which hydroxymethyl group from 5,10-methylenetetrahydrofolate is transferred onto alpha-ketoisovalerate to form ketopantoate. This is 3-methyl-2-oxobutanoate hydroxymethyltransferase from Psychrobacter arcticus (strain DSM 17307 / VKM B-2377 / 273-4).